A 353-amino-acid chain; its full sequence is Photosystem II D2 protein (353 aa).

Thr-2 is modified (N-acetylthreonine). Thr-2 is modified (phosphothreonine). A helical membrane pass occupies residues 41 to 61 (CAYFALGGWFTGTTFVTSWYT). A chlorophyll a-binding site is contributed by His-118. The chain crosses the membrane as a helical span at residues 125–141 (GFMLRQFELARSVQLRP). 2 residues coordinate pheophytin a: Gln-130 and Asn-143. The helical transmembrane segment at 153-166 (VFVSVFLIYPLGQS) threads the bilayer. A chlorophyll a-binding site is contributed by His-198. A helical transmembrane segment spans residues 208–228 (AALLCAIHGATVENTLFEDGD). The a plastoquinone site is built by His-215 and Phe-262. Position 215 (His-215) interacts with Fe cation. A Fe cation-binding site is contributed by His-269. A helical transmembrane segment spans residues 279-295 (GLWMSAIGVVGLALNLR).

It belongs to the reaction center PufL/M/PsbA/D family. In terms of assembly, PSII is composed of 1 copy each of membrane proteins PsbA, PsbB, PsbC, PsbD, PsbE, PsbF, PsbH, PsbI, PsbJ, PsbK, PsbL, PsbM, PsbT, PsbX, PsbY, PsbZ, Psb30/Ycf12, at least 3 peripheral proteins of the oxygen-evolving complex and a large number of cofactors. It forms dimeric complexes. Requires The D1/D2 heterodimer binds P680, chlorophylls that are the primary electron donor of PSII, and subsequent electron acceptors. It shares a non-heme iron and each subunit binds pheophytin, quinone, additional chlorophylls, carotenoids and lipids. There is also a Cl(-1) ion associated with D1 and D2, which is required for oxygen evolution. The PSII complex binds additional chlorophylls, carotenoids and specific lipids. as cofactor.

It localises to the plastid. The protein localises to the chloroplast thylakoid membrane. The catalysed reaction is 2 a plastoquinone + 4 hnu + 2 H2O = 2 a plastoquinol + O2. Functionally, photosystem II (PSII) is a light-driven water:plastoquinone oxidoreductase that uses light energy to abstract electrons from H(2)O, generating O(2) and a proton gradient subsequently used for ATP formation. It consists of a core antenna complex that captures photons, and an electron transfer chain that converts photonic excitation into a charge separation. The D1/D2 (PsbA/PsbD) reaction center heterodimer binds P680, the primary electron donor of PSII as well as several subsequent electron acceptors. D2 is needed for assembly of a stable PSII complex. The chain is Photosystem II D2 protein from Drimys granadensis.